The chain runs to 558 residues: MAALTRNPEFQKLLEWHRANSANLKLRELFEADPERFNHFSLNLNTNHGHILLDYSKNLVNKEVLHMLVDLAKSRGVEAARDNMFSGLKINSTEDRAVLHVALRNRSNRSIMMDGKDVMPEVNKVLDKMKSFCQRVRSGDWKGYTGKAITDIINIGIGGSDLGPLMVTEALKPYSKGGPRVWFVSNIDGTHIAKTLANLNPESSLFIIASKTFTTQETITNAETAKEWFLQAAKDPSAVAKHFVALSTNTDKVKEFGIDPKNMFEFWDWVGGRYSLWSAIGLSIALHVGFDHFEQLLSGAHWMDQHFMKTPLDKNAPVLLALLGIWYINFYGCETHAMLPYDQYMHRFAAYFQQGDMESNGKYITKSGARVDYQTGPIVWGEPGTNGQHAFYQLIHQGTKMIPCDFLIPVQTQHPIRNGLHHKILLANFLAQTEALMKGKSPEEARKELQAAGKSPEELEKLLPHKVFEGNRPTNSIVFTKLTPFILGALIAMYEHKIFVQGIIWDINSFDQWGVELGKQLAKKIEPELDGSSAVTSHDSSTNGLIGFIKLQRDTKID.

An N-acetylalanine modification is found at Ala2. At Lys12 the chain carries N6-acetyllysine. A phosphoserine mark is found at Ser86 and Ser107. At Lys142 the chain carries N6-acetyllysine. 159-160 serves as a coordination point for D-glucose 6-phosphate; it reads GS. The residue at position 185 (Ser185) is a Phosphoserine; by CK2. 210-215 is a binding site for D-glucose 6-phosphate; the sequence is SKTFTT. Thr250 is subject to Phosphothreonine. Gln354, Glu358, and His389 together coordinate D-glucose 6-phosphate. Glu358 (proton donor) is an active-site residue. The active site involves His389. The residue at position 454 (Lys454) is an N6-acetyllysine; alternate. Lys454 is modified (N6-malonyllysine; alternate). At Lys454 the chain carries N6-succinyllysine; alternate. A Phosphoserine modification is found at Ser455. Lys519 provides a ligand contact to D-glucose 6-phosphate. Residue Lys519 is part of the active site.

Belongs to the GPI family. In terms of assembly, homodimer; in the catalytically active form. Monomer in the secreted form. Post-translationally, phosphorylation at Ser-185 by CK2 has been shown to decrease enzymatic activity and may contribute to secretion by a non-classical secretory pathway. In terms of processing, ISGylated.

The protein resides in the cytoplasm. It is found in the secreted. It catalyses the reaction alpha-D-glucose 6-phosphate = beta-D-fructose 6-phosphate. It participates in carbohydrate degradation; glycolysis; D-glyceraldehyde 3-phosphate and glycerone phosphate from D-glucose: step 2/4. Its function is as follows. In the cytoplasm, catalyzes the conversion of glucose-6-phosphate to fructose-6-phosphate, the second step in glycolysis, and the reverse reaction during gluconeogenesis. Besides it's role as a glycolytic enzyme, also acts as a secreted cytokine: acts as an angiogenic factor (AMF) that stimulates endothelial cell motility. Acts as a neurotrophic factor, neuroleukin, for spinal and sensory neurons. It is secreted by lectin-stimulated T-cells and induces immunoglobulin secretion. The sequence is that of Glucose-6-phosphate isomerase from Rattus norvegicus (Rat).